The primary structure comprises 392 residues: Hercynylcysteine sulfoxide lyase (392 aa).

An N6-(pyridoxal phosphate)lysine modification is found at Lys219.

The protein belongs to the class-V pyridoxal-phosphate-dependent aminotransferase family. EgtE subfamily. Pyridoxal 5'-phosphate serves as cofactor.

The protein resides in the cytoplasm. It is found in the nucleus. It catalyses the reaction S-(hercyn-2-yl)-L-cysteine S-oxide + AH2 + H(+) = ergothioneine + pyruvate + A + NH4(+). Its pathway is amino-acid biosynthesis; ergothioneine biosynthesis. Catalyzes the conversion of hercynylcysteine sulfoxide to ergothioneine by cleaving the cysteine residue at the sulfur atom, the last step in the biosynthesis pathway of ergothioneine. This is Hercynylcysteine sulfoxide lyase from Schizosaccharomyces pombe (strain 972 / ATCC 24843) (Fission yeast).